Here is a 380-residue protein sequence, read N- to C-terminus: Cytochrome b (380 aa).

The next 4 helical transmembrane spans lie at 33–53, 77–98, 113–133, and 178–198; these read FGSLLGLCLATQILTGLFLAM, WLIRNIHANGASFFFICIYMHI, WNIGVVLLLLTMMTAFVGYVL, and FFAFHFLFPFVIAAATVLHLL. Residues histidine 83 and histidine 97 each coordinate heme b. The heme b site is built by histidine 182 and histidine 196. Histidine 201 is an a ubiquinone binding site. The next 4 membrane-spanning stretches (helical) occupy residues 226–246, 288–308, 320–340, and 347–367; these read YKDLLGFVAMLLGLTSLALFA, LGGVLALLFSILVLMVVPILH, LTQFLFWALVADMLILTWIGG, and FIIIGQIASVIYFTIFLVLSP.

Belongs to the cytochrome b family. The cytochrome bc1 complex contains 3 respiratory subunits (MT-CYB, CYC1 and UQCRFS1), 2 core proteins (UQCRC1 and UQCRC2) and probably 6 low-molecular weight proteins. Requires heme b as cofactor.

The protein localises to the mitochondrion inner membrane. Component of the ubiquinol-cytochrome c reductase complex (complex III or cytochrome b-c1 complex) that is part of the mitochondrial respiratory chain. The b-c1 complex mediates electron transfer from ubiquinol to cytochrome c. Contributes to the generation of a proton gradient across the mitochondrial membrane that is then used for ATP synthesis. The polypeptide is Cytochrome b (mt-cyb) (Oncorhynchus keta (Chum salmon)).